A 166-amino-acid chain; its full sequence is MSEAIIAKKAELVDVVAEKMKAAASIVVVDARGLTVEQDTVLRRELRGSEVEYKVIKNSILRRAAEKAGLEDLASVFVGPSAVAFSNEDVIAPAKILNDFSKNAEALEIKGGAIEGAVASKEEILALATLPNREGLLSMLLSVLQAPVRNVALAVKAVAESKEDAA.

This sequence belongs to the universal ribosomal protein uL10 family. As to quaternary structure, part of the ribosomal stalk of the 50S ribosomal subunit. The N-terminus interacts with L11 and the large rRNA to form the base of the stalk. The C-terminus forms an elongated spine to which L12 dimers bind in a sequential fashion forming a multimeric L10(L12)X complex.

In terms of biological role, forms part of the ribosomal stalk, playing a central role in the interaction of the ribosome with GTP-bound translation factors. The protein is Large ribosomal subunit protein uL10 of Streptococcus pneumoniae (strain ATCC 700669 / Spain 23F-1).